Here is a 149-residue protein sequence, read N- to C-terminus: Oligosaccharyltransferase complex subunit OSTC (149 aa).

Topologically, residues 1 to 32 (METLYRVPFLVLECPNLKLKKPPWVHMPSAMT) are cytoplasmic. A helical membrane pass occupies residues 33–53 (VYALVVVSYFLITGGIIYDVI). The Extracellular segment spans residues 54–83 (VEPPSVGSMTDEHGHQRPVAFLAYRVNGQY). A helical transmembrane segment spans residues 84–104 (IMEGLASSFLFTMGGLGFIIL). The Cytoplasmic portion of the chain corresponds to 105–117 (DRSNAPNIPKLNR). A helical transmembrane segment spans residues 118-138 (FLLLFIGFVCVLLSFFMARVF). Over 139–149 (MRMKLPGYLMG) the chain is Extracellular.

Belongs to the OSTC family. As to quaternary structure, component of STT3A-containing oligosaccharyl transferase (OST-A) complex. STT3A-containing complex assembly occurs through the formation of 3 subcomplexes. Subcomplex 1 contains RPN1 and TMEM258, subcomplex 2 contains the STT3A-specific subunits STT3A, DC2/OSTC, and KCP2 as well as the core subunit OST4, and subcomplex 3 contains RPN2, DAD1, and OST48. The OST-A complex can form stable complexes with the Sec61 complex or with both the Sec61 and TRAP complexes. Interacts with PSEN1 and NCSTN; indicative for an association with the gamma-secretase complex.

The protein resides in the endoplasmic reticulum. It localises to the membrane. It participates in protein modification; protein glycosylation. Its function is as follows. Subunit of STT3A-containing oligosaccharyl transferase (OST-A) complex that catalyzes the initial transfer of a defined glycan (Glc(3)Man(9)GlcNAc(2) in eukaryotes) from the lipid carrier dolichol-pyrophosphate to an asparagine residue within an Asn-X-Ser/Thr consensus motif in nascent polypeptide chains, the first step in protein N-glycosylation. N-glycosylation occurs cotranslationally and the complex associates with the Sec61 complex at the channel-forming translocon complex that mediates protein translocation across the endoplasmic reticulum (ER). Within the OST-A complex, acts as an adapter that anchors the OST-A complex to the Sec61 complex. May be involved in N-glycosylation of APP (amyloid-beta precursor protein). Can modulate gamma-secretase cleavage of APP by enhancing endoprotelysis of PSEN1. In Canis lupus familiaris (Dog), this protein is Oligosaccharyltransferase complex subunit OSTC.